The following is a 425-amino-acid chain: uncharacterized protein (425 aa).

The protein to K.pneumoniae SorE.

This is an uncharacterized protein from Escherichia coli (strain K12).